We begin with the raw amino-acid sequence, 286 residues long: uncharacterized protein (286 aa).

NADP(+)-binding residues include isoleucine 54, asparagine 128, and lysine 162. Serine 178 functions as the Proton donor in the catalytic mechanism. Tyrosine 192, lysine 196, isoleucine 225, and threonine 227 together coordinate NADP(+). Catalysis depends on tyrosine 192, which acts as the Proton acceptor. Lysine 196 acts as the Lowers pKa of active site Tyr in catalysis.

The protein belongs to the short-chain dehydrogenases/reductases (SDR) family.

This is an uncharacterized protein from Schizosaccharomyces pombe (strain 972 / ATCC 24843) (Fission yeast).